Consider the following 1429-residue polypeptide: Alpha-agarase (1429 aa).

Residues 1-26 (MFKTKRSLLNSSIAISFAVLGVQAQA) form the signal peptide. CBM6 domains are found at residues 29 to 161 (LELQ…FRLT) and 211 to 345 (FVIQ…LTFT). Disordered stretches follow at residues 349–400 (SDGG…DGVS) and 474–495 (NTPAGTQVDASGCETDNGGEPG). Positions 369 to 378 (SSDSCPNTPT) are enriched in polar residues. Residues 490–638 (NGGEPGDSYY…GGTNFVHPSN (149 aa)) enclose the PA14 domain. Positions 662–793 (IYIQLEDFDE…QWSGDLVRLA (132 aa)) constitute a CBM6 3 domain.

It belongs to the glycosyl hydrolase 96 family. Homodimer. Requires Ca(2+) as cofactor.

It carries out the reaction Endohydrolysis of 1,3-alpha-L-galactosidic linkages in agarose, yielding agarotetraose as the major product.. Alpha-agarase. Does not hydrolyze agarotetraose, agarohexaose, kappa-carrageenan, iota-carrageenan or lambda-carrageenan. This Alteromonas agarilytica protein is Alpha-agarase.